Consider the following 433-residue polypeptide: Bifunctional protein GlmU (433 aa).

A pyrophosphorylase region spans residues 1-226; sequence MLSVIILAAG…EECFLGVNSQ (226 aa). UDP-N-acetyl-alpha-D-glucosamine is bound by residues 7–10, Lys21, and 80–81; these read LAAG and GT. Asp106 is a binding site for Mg(2+). 4 residues coordinate UDP-N-acetyl-alpha-D-glucosamine: Gly138, Glu152, Asn167, and Asn224. Asn224 lines the Mg(2+) pocket. Residues 227–247 form a linker region; that stretch reads TERAKAEEIMLERLRKNAMDL. The tract at residues 248 to 433 is N-acetyltransferase; it reads GVVMQLPSSI…NGYFKFFKKP (186 aa). UDP-N-acetyl-alpha-D-glucosamine-binding residues include Arg311 and Lys328. The Proton acceptor role is filled by His339. Residues Tyr342 and Asn353 each coordinate UDP-N-acetyl-alpha-D-glucosamine. Acetyl-CoA is bound by residues Ala356, 362-363, Ser381, Ser399, and Arg416; that span reads NY.

The protein in the N-terminal section; belongs to the N-acetylglucosamine-1-phosphate uridyltransferase family. In the C-terminal section; belongs to the transferase hexapeptide repeat family. Homotrimer. Mg(2+) is required as a cofactor.

Its subcellular location is the cytoplasm. It catalyses the reaction alpha-D-glucosamine 1-phosphate + acetyl-CoA = N-acetyl-alpha-D-glucosamine 1-phosphate + CoA + H(+). The catalysed reaction is N-acetyl-alpha-D-glucosamine 1-phosphate + UTP + H(+) = UDP-N-acetyl-alpha-D-glucosamine + diphosphate. It functions in the pathway nucleotide-sugar biosynthesis; UDP-N-acetyl-alpha-D-glucosamine biosynthesis; N-acetyl-alpha-D-glucosamine 1-phosphate from alpha-D-glucosamine 6-phosphate (route II): step 2/2. Its pathway is nucleotide-sugar biosynthesis; UDP-N-acetyl-alpha-D-glucosamine biosynthesis; UDP-N-acetyl-alpha-D-glucosamine from N-acetyl-alpha-D-glucosamine 1-phosphate: step 1/1. The protein operates within bacterial outer membrane biogenesis; LPS lipid A biosynthesis. Catalyzes the last two sequential reactions in the de novo biosynthetic pathway for UDP-N-acetylglucosamine (UDP-GlcNAc). The C-terminal domain catalyzes the transfer of acetyl group from acetyl coenzyme A to glucosamine-1-phosphate (GlcN-1-P) to produce N-acetylglucosamine-1-phosphate (GlcNAc-1-P), which is converted into UDP-GlcNAc by the transfer of uridine 5-monophosphate (from uridine 5-triphosphate), a reaction catalyzed by the N-terminal domain. In Helicobacter pylori (strain HPAG1), this protein is Bifunctional protein GlmU.